Reading from the N-terminus, the 252-residue chain is tRNA pseudouridine synthase A (252 aa).

The Nucleophile role is filled by D54. Y112 contacts substrate.

The protein belongs to the tRNA pseudouridine synthase TruA family. Homodimer.

It catalyses the reaction uridine(38/39/40) in tRNA = pseudouridine(38/39/40) in tRNA. Functionally, formation of pseudouridine at positions 38, 39 and 40 in the anticodon stem and loop of transfer RNAs. The sequence is that of tRNA pseudouridine synthase A from Oenococcus oeni (strain ATCC BAA-331 / PSU-1).